A 95-amino-acid chain; its full sequence is Small ribosomal subunit protein uS15 (95 aa).

The protein belongs to the universal ribosomal protein uS15 family. Part of the 30S ribosomal subunit. Forms a bridge to the 50S subunit in the 70S ribosome, contacting the 23S rRNA.

Its function is as follows. One of the primary rRNA binding proteins, it binds directly to 16S rRNA where it helps nucleate assembly of the platform of the 30S subunit by binding and bridging several RNA helices of the 16S rRNA. Forms an intersubunit bridge (bridge B4) with the 23S rRNA of the 50S subunit in the ribosome. In Streptomyces avermitilis (strain ATCC 31267 / DSM 46492 / JCM 5070 / NBRC 14893 / NCIMB 12804 / NRRL 8165 / MA-4680), this protein is Small ribosomal subunit protein uS15.